The sequence spans 1035 residues: MSEIPTRFEHAEEADKIAQAWTDAKCSHADPESSKPPFSVVIPPPNVTGALHLGHGLNNTLQDIVVRRKRMQGFETLWMPGTDHAGIATQAVVERRLKEQEDKTRHDLGREALVDRIWQWKDQYEERIIGQLKRMGTSCDWERLRFTLDPICAAAVRATFFDLFGKRRIYRGKRLVNWDTFLQTAVSDDEVFNETKKGHFYHFRYPVIDPKPGEPEFVTIATTRPETMLGDTAVAVHPDPAAALDAVEAGLREKLSDANEKEAVDLNKQIEALQKRREERLPELIQLRDMAADGRKLMLPLVDREIDLVADEWAKPEMGSGCVKITPAHDPNDYEVGIRQDLPMINILNSDGTLNGEGGQFAGLTIPKARKAVVAALEELGLMGDIEDREIELPHSDRSKTPIEPYLADQWFVAMDELAQSAMDAVSDERVQIFPARYRKGYLDWLSEKRDWPVSRQLWWGHRIPIWSVGGLSQQEANELSSELEKLAERHPDQIAQRIDSDGVDAAGEPTKAVFVCIRSEDETVEADVEALGLQQDPDVLDTWFSSALWPHSTLGWPAQTPELAKFYPTATLITSRDILTLWVARMVLMGLNNVGEVPFSEVFIHPKILDGLGETMSKSKGNGVDPIDVIDKFGPDALRFGLARLATETQDVRMPVQYECPSCEKLIDQTKKNRALPSMDCPACGKPFSTQWAETEADKSLPKAAVVSERFETARNFVNKLWNASRFVMMNLDGFEPTSLDVASLPIEDRWLLSRLSTVTQTVGDAIERYQFGEAARVLYDFAWDEFCSFYVEIAKPRLSDDSQRQIAQNVIAHGLDQLLRLLHPIMPFVTESVWNHLGQIAPKRGVPEPAEVGPFVMTASFPVADESHHDSKIERQFSEFQQIVAAIRQIRASQNIAPKETVPAAIRCSASSQELLQPMTAYFEALAGAEVQSLGPDTTAFETDAHLALPDVDVDVHVDLEKFIDVEAELARLEKLQGQLTGQITGKQNKLSNESFVSRAPADIVQKERESLAGLQTQLEAVAQDILKLQSKK.

The short motif at 45-55 (PNVTGALHLGH) is the 'HIGH' region element. The stretch at 253 to 281 (EKLSDANEKEAVDLNKQIEALQKRREERL) forms a coiled coil. An ATP-binding site is contributed by lysine 619. Residues 967–1035 (DVEAELARLE…QDILKLQSKK (69 aa)) adopt a coiled-coil conformation.

The protein belongs to the class-I aminoacyl-tRNA synthetase family. ValS type 1 subfamily. As to quaternary structure, monomer.

The protein resides in the cytoplasm. It catalyses the reaction tRNA(Val) + L-valine + ATP = L-valyl-tRNA(Val) + AMP + diphosphate. Functionally, catalyzes the attachment of valine to tRNA(Val). As ValRS can inadvertently accommodate and process structurally similar amino acids such as threonine, to avoid such errors, it has a 'posttransfer' editing activity that hydrolyzes mischarged Thr-tRNA(Val) in a tRNA-dependent manner. This Rhodopirellula baltica (strain DSM 10527 / NCIMB 13988 / SH1) protein is Valine--tRNA ligase.